Consider the following 38-residue polypeptide: Large ribosomal subunit protein bL36 (38 aa).

It belongs to the bacterial ribosomal protein bL36 family.

In Chlorobium limicola (strain DSM 245 / NBRC 103803 / 6330), this protein is Large ribosomal subunit protein bL36.